We begin with the raw amino-acid sequence, 269 residues long: Protein-L-isoaspartate O-methyltransferase (269 aa).

The disordered stretch occupies residues 1-53 (MSAGQRPAPKFPLRLDQVKPAGRSGAAPLLRPQRPLHQAATERGRGTTPAGLG). Serine 113 is an active-site residue.

The protein belongs to the methyltransferase superfamily. L-isoaspartyl/D-aspartyl protein methyltransferase family.

The protein localises to the cytoplasm. It catalyses the reaction [protein]-L-isoaspartate + S-adenosyl-L-methionine = [protein]-L-isoaspartate alpha-methyl ester + S-adenosyl-L-homocysteine. Its function is as follows. Catalyzes the methyl esterification of L-isoaspartyl residues in peptides and proteins that result from spontaneous decomposition of normal L-aspartyl and L-asparaginyl residues. It plays a role in the repair and/or degradation of damaged proteins. In Methylibium petroleiphilum (strain ATCC BAA-1232 / LMG 22953 / PM1), this protein is Protein-L-isoaspartate O-methyltransferase.